The following is a 230-amino-acid chain: UPF0173 metal-dependent hydrolase OEOE_1287 (230 aa).

Belongs to the UPF0173 family.

The protein is UPF0173 metal-dependent hydrolase OEOE_1287 of Oenococcus oeni (strain ATCC BAA-331 / PSU-1).